Consider the following 471-residue polypeptide: MSRSLLVENSRTINSNEEKGVNESQYILQKRNVPRTILGNVTNNANILQEISMNRKIGMKNFSKLNNFFPLKDDVSRADDFTSSFNDSRQGVKQEVLNNKENIPEYGYSEQEKQQCSNDDSFHTNSTALSCNRLIYSENKSISTQMEWQKKIMREDSKKKRPISTLVEQDDQKKFKLHELTTEEEVLEEYEWDDLDEEDCDDPLMVSEEVNDIFDYLHHLEIITLPNKANLYKHKNIKQNRDILVNWIIKIHNKFGLLPETLYLAINIMDRFLCEEVVQLNRLQLVGTSCLFIASKYEEIYSPSIKHFAYETDGACSVEDIKEGERFILEKLDFQISFANPMNFLRRISKADDYDIQSRTLAKFLMEISIVDFKFIGILPSLCASAAMFLSRKMLGKGTWDGNLIHYSGGYTKAKLYPVCQLLMDYLVGSTIHDEFLKKYQSRRFLKASIISIEWALKVRKNGYDIMTLHE.

It belongs to the cyclin family. Cyclin AB subfamily.

Essential for the control of the cell cycle at the G2/M (mitosis) transition. Interacts with the CDC2 protein kinase to form MPF. G2/M cyclins accumulate steadily during G2 and are abruptly destroyed at mitosis. This is G2/mitotic-specific cyclin-1 (CLB1) from Saccharomyces cerevisiae (strain ATCC 204508 / S288c) (Baker's yeast).